The chain runs to 294 residues: Cytidine deaminase (294 aa).

CMP/dCMP-type deaminase domains follow at residues 48–168 (DEDA…FGPK) and 186–294 (LTGD…VLLG). 89-91 (NME) is a binding site for substrate. His-102 serves as a coordination point for Zn(2+). The active-site Proton donor is the Glu-104. The Zn(2+) site is built by Cys-129 and Cys-132.

This sequence belongs to the cytidine and deoxycytidylate deaminase family. As to quaternary structure, homodimer. Requires Zn(2+) as cofactor.

The enzyme catalyses cytidine + H2O + H(+) = uridine + NH4(+). It carries out the reaction 2'-deoxycytidine + H2O + H(+) = 2'-deoxyuridine + NH4(+). In terms of biological role, this enzyme scavenges exogenous and endogenous cytidine and 2'-deoxycytidine for UMP synthesis. The chain is Cytidine deaminase from Salmonella enteritidis PT4 (strain P125109).